Here is a 379-residue protein sequence, read N- to C-terminus: Histidinol-phosphate aminotransferase (379 aa).

Lys-236 carries the post-translational modification N6-(pyridoxal phosphate)lysine.

The protein belongs to the class-II pyridoxal-phosphate-dependent aminotransferase family. Histidinol-phosphate aminotransferase subfamily. In terms of assembly, homodimer. Pyridoxal 5'-phosphate is required as a cofactor.

The catalysed reaction is L-histidinol phosphate + 2-oxoglutarate = 3-(imidazol-4-yl)-2-oxopropyl phosphate + L-glutamate. The protein operates within amino-acid biosynthesis; L-histidine biosynthesis; L-histidine from 5-phospho-alpha-D-ribose 1-diphosphate: step 7/9. This is Histidinol-phosphate aminotransferase from Desulfotalea psychrophila (strain LSv54 / DSM 12343).